The sequence spans 127 residues: Ribosome-binding factor A (127 aa).

Belongs to the RbfA family. As to quaternary structure, monomer. Binds 30S ribosomal subunits, but not 50S ribosomal subunits or 70S ribosomes.

Its subcellular location is the cytoplasm. One of several proteins that assist in the late maturation steps of the functional core of the 30S ribosomal subunit. Associates with free 30S ribosomal subunits (but not with 30S subunits that are part of 70S ribosomes or polysomes). Required for efficient processing of 16S rRNA. May interact with the 5'-terminal helix region of 16S rRNA. The chain is Ribosome-binding factor A from Rickettsia typhi (strain ATCC VR-144 / Wilmington).